We begin with the raw amino-acid sequence, 229 residues long: Cytidylate kinase (229 aa).

12-20 (GPSGSGKGT) provides a ligand contact to ATP.

It belongs to the cytidylate kinase family. Type 1 subfamily.

Its subcellular location is the cytoplasm. It carries out the reaction CMP + ATP = CDP + ADP. The enzyme catalyses dCMP + ATP = dCDP + ADP. The protein is Cytidylate kinase of Pseudomonas syringae pv. tomato (strain ATCC BAA-871 / DC3000).